Reading from the N-terminus, the 595-residue chain is NADH-quinone oxidoreductase subunit C/D (595 aa).

Positions 1 to 186 (MVTDNSKATD…TPYFLNNAKQ (186 aa)) are NADH dehydrogenase I subunit C. An NADH dehydrogenase I subunit D region spans residues 210-595 (DFMFLNLGPN…IDIVMADTDR (386 aa)).

This sequence in the N-terminal section; belongs to the complex I 30 kDa subunit family. The protein in the C-terminal section; belongs to the complex I 49 kDa subunit family. In terms of assembly, NDH-1 is composed of 13 different subunits. Subunits NuoB, CD, E, F, and G constitute the peripheral sector of the complex.

The protein localises to the cell inner membrane. The catalysed reaction is a quinone + NADH + 5 H(+)(in) = a quinol + NAD(+) + 4 H(+)(out). In terms of biological role, NDH-1 shuttles electrons from NADH, via FMN and iron-sulfur (Fe-S) centers, to quinones in the respiratory chain. The immediate electron acceptor for the enzyme in this species is believed to be ubiquinone. Couples the redox reaction to proton translocation (for every two electrons transferred, four hydrogen ions are translocated across the cytoplasmic membrane), and thus conserves the redox energy in a proton gradient. This Psychrobacter sp. (strain PRwf-1) protein is NADH-quinone oxidoreductase subunit C/D.